Reading from the N-terminus, the 119-residue chain is Large ribosomal subunit protein uL18 (119 aa).

Residues 1–10 (MKKIKEAEQR) are compositionally biased toward basic and acidic residues. The interval 1 to 20 (MKKIKEAEQRKLRRKKRIKD) is disordered.

It belongs to the universal ribosomal protein uL18 family. Part of the 50S ribosomal subunit; part of the 5S rRNA/L5/L18/L25 subcomplex. Contacts the 5S and 23S rRNAs.

Its function is as follows. This is one of the proteins that bind and probably mediate the attachment of the 5S RNA into the large ribosomal subunit, where it forms part of the central protuberance. This is Large ribosomal subunit protein uL18 from Borreliella burgdorferi (strain ATCC 35210 / DSM 4680 / CIP 102532 / B31) (Borrelia burgdorferi).